The sequence spans 415 residues: Histidine--tRNA ligase (415 aa).

Belongs to the class-II aminoacyl-tRNA synthetase family. Homodimer.

The protein localises to the cytoplasm. The catalysed reaction is tRNA(His) + L-histidine + ATP = L-histidyl-tRNA(His) + AMP + diphosphate + H(+). The sequence is that of Histidine--tRNA ligase from Clostridium botulinum (strain Kyoto / Type A2).